The following is a 360-amino-acid chain: Alanine racemase (360 aa).

K34 serves as the catalytic Proton acceptor; specific for D-alanine. Residue K34 is modified to N6-(pyridoxal phosphate)lysine. R129 contributes to the substrate binding site. The active-site Proton acceptor; specific for L-alanine is the Y254. M302 serves as a coordination point for substrate.

This sequence belongs to the alanine racemase family. It depends on pyridoxal 5'-phosphate as a cofactor.

The catalysed reaction is L-alanine = D-alanine. It functions in the pathway amino-acid biosynthesis; D-alanine biosynthesis; D-alanine from L-alanine: step 1/1. Functionally, catalyzes the interconversion of L-alanine and D-alanine. May also act on other amino acids. The polypeptide is Alanine racemase (alr) (Pectobacterium carotovorum subsp. carotovorum (strain PC1)).